The chain runs to 216 residues: Pyridoxine/pyridoxamine 5'-phosphate oxidase (216 aa).

FMN is bound by residues 64–69 (RVVLLK), 79–80 (FT), Lys-85, Lys-86, and Gln-108. Residue Lys-69 participates in substrate binding. Residues Tyr-126, Arg-130, and Ser-134 each coordinate substrate. Residues 143-144 (QS) and Trp-188 each bind FMN. Position 194–196 (194–196 (RKH)) interacts with substrate. Arg-198 contributes to the FMN binding site.

The protein belongs to the pyridoxamine 5'-phosphate oxidase family. As to quaternary structure, homodimer. Requires FMN as cofactor.

It catalyses the reaction pyridoxamine 5'-phosphate + O2 + H2O = pyridoxal 5'-phosphate + H2O2 + NH4(+). It carries out the reaction pyridoxine 5'-phosphate + O2 = pyridoxal 5'-phosphate + H2O2. The protein operates within cofactor metabolism; pyridoxal 5'-phosphate salvage; pyridoxal 5'-phosphate from pyridoxamine 5'-phosphate: step 1/1. Its pathway is cofactor metabolism; pyridoxal 5'-phosphate salvage; pyridoxal 5'-phosphate from pyridoxine 5'-phosphate: step 1/1. Catalyzes the oxidation of either pyridoxine 5'-phosphate (PNP) or pyridoxamine 5'-phosphate (PMP) into pyridoxal 5'-phosphate (PLP). This chain is Pyridoxine/pyridoxamine 5'-phosphate oxidase, found in Wolbachia pipientis wMel.